The chain runs to 449 residues: Maturation protein A (449 aa).

The protein belongs to the Leviviricetes maturation protein family. In terms of assembly, interacts with the host pilus.

Its subcellular location is the virion. Its function is as follows. The maturation protein is required for the typical attachment of the phage to the side of the bacterial F-pili. Binds to sequences located toward each end of the genome, hence circularizing it. The RNA genome-maturation protein A complex is released from the capsid upon host receptor binding. Maturation protein A enters the cell along with the viral RNA. This Pseudomonas aeruginosa (Bacteriophage PP7) protein is Maturation protein A.